A 428-amino-acid polypeptide reads, in one-letter code: Nuclear hormone receptor family member nhr-44 (428 aa).

A DNA-binding region (nuclear receptor) is located at residues 21 to 98; that stretch reads SEKCLVCFQP…LGMKPDNIQR (78 aa). 2 consecutive NR C4-type zinc fingers follow at residues 24-44 and 61-86; these read CLVC…CRAC and CREG…SDKC. Residues 181 to 427 form the NR LBD domain; the sequence is SLEQLAFGLQ…LSHPEMFQFS (247 aa).

It belongs to the nuclear hormone receptor family.

Its subcellular location is the nucleus. Orphan nuclear receptor. This is Nuclear hormone receptor family member nhr-44 (nhr-44) from Caenorhabditis elegans.